The following is a 552-amino-acid chain: Acyl-CoA-dependent acyltransferase MAC1 (552 aa).

This sequence belongs to the trichothecene O-acetyltransferase family.

Its pathway is secondary metabolite biosynthesis. Its function is as follows. Acyl-CoA-dependent acyltransferase; part of the gene cluster that mediates the biosynthesis of mannosylerythritol lipids (MELs), surface-active substances that enhance the availability of water-insoluble substrates. Depending on the number of acetyl groups, mannosylerythritol lipids can be differentiated into MEL A (fully acetylated), MEL B and MEL C (monoacetylated at R-6 and R-4, respectively), and the fully deacetylated MEL D. The first step in the pathway is the generation of mannosylerythritol by the glycosyltransferase EMT1 which catalyzes the transfer of GDP-mannose to the C-4 atom of meso-erythritol. This reaction has to be stereospecific, since only mannosyl-D-erythritol is generated. The produced disaccharide is subsequently acylated with fatty acids of various lengths by the acyltransferases MAC1 and MAC2 at positions C-2 and C-3, repectively. The existence of MEL derivatives which carry an acetyl group at C-2 implies that at least MAC1 also accepts acetyl-CoA as a donor. The final step of MEL biosynthesis is the acetylation of the fully acylated mannosylerythritol lipids catalyzed by the acetyl-CoA-dependent acetyltransferase MAT1. MAT1 displays a relaxed regioselectivity and is able to transfer acetylgroups to both positions C-4 and C-6 of the mannosyl moiety. In Pseudozyma antarctica (strain T-34) (Yeast), this protein is Acyl-CoA-dependent acyltransferase MAC1.